The sequence spans 100 residues: Nucleoid-associated protein RoseRS_1534 (100 aa).

This sequence belongs to the YbaB/EbfC family. Homodimer.

It is found in the cytoplasm. Its subcellular location is the nucleoid. In terms of biological role, binds to DNA and alters its conformation. May be involved in regulation of gene expression, nucleoid organization and DNA protection. The polypeptide is Nucleoid-associated protein RoseRS_1534 (Roseiflexus sp. (strain RS-1)).